A 95-amino-acid polypeptide reads, in one-letter code: Putative pterin-4-alpha-carbinolamine dehydratase (95 aa).

Belongs to the pterin-4-alpha-carbinolamine dehydratase family.

It catalyses the reaction (4aS,6R)-4a-hydroxy-L-erythro-5,6,7,8-tetrahydrobiopterin = (6R)-L-erythro-6,7-dihydrobiopterin + H2O. This chain is Putative pterin-4-alpha-carbinolamine dehydratase, found in Thermosynechococcus vestitus (strain NIES-2133 / IAM M-273 / BP-1).